Consider the following 382-residue polypeptide: tRNA(Ile)-lysidine synthase (382 aa).

50 to 55 provides a ligand contact to ATP; the sequence is SGGRDS.

The protein belongs to the tRNA(Ile)-lysidine synthase family.

It localises to the cytoplasm. It catalyses the reaction cytidine(34) in tRNA(Ile2) + L-lysine + ATP = lysidine(34) in tRNA(Ile2) + AMP + diphosphate + H(+). Functionally, ligates lysine onto the cytidine present at position 34 of the AUA codon-specific tRNA(Ile) that contains the anticodon CAU, in an ATP-dependent manner. Cytidine is converted to lysidine, thus changing the amino acid specificity of the tRNA from methionine to isoleucine. In Bifidobacterium animalis subsp. lactis (strain AD011), this protein is tRNA(Ile)-lysidine synthase.